Reading from the N-terminus, the 196-residue chain is Holliday junction branch migration complex subunit RuvA (196 aa).

Positions 1–63 (MINKICGKIV…EDEIRLFGFL (63 aa)) are domain I. The interval 64–135 (NVSEREVFEK…KLRGKLVKVN (72 aa)) is domain II. The flexible linker stretch occupies residues 135–138 (NEAS). Residues 139–196 (SGVLKFKELEQSIVNMGFDRKLVAAAIKEIMLIDEFLMLRQVDQEQFLFREILRKLSG) form a domain III region.

It belongs to the RuvA family. Homotetramer. Forms an RuvA(8)-RuvB(12)-Holliday junction (HJ) complex. HJ DNA is sandwiched between 2 RuvA tetramers; dsDNA enters through RuvA and exits via RuvB. An RuvB hexamer assembles on each DNA strand where it exits the tetramer. Each RuvB hexamer is contacted by two RuvA subunits (via domain III) on 2 adjacent RuvB subunits; this complex drives branch migration. In the full resolvosome a probable DNA-RuvA(4)-RuvB(12)-RuvC(2) complex forms which resolves the HJ.

The protein resides in the cytoplasm. Functionally, the RuvA-RuvB-RuvC complex processes Holliday junction (HJ) DNA during genetic recombination and DNA repair, while the RuvA-RuvB complex plays an important role in the rescue of blocked DNA replication forks via replication fork reversal (RFR). RuvA specifically binds to HJ cruciform DNA, conferring on it an open structure. The RuvB hexamer acts as an ATP-dependent pump, pulling dsDNA into and through the RuvAB complex. HJ branch migration allows RuvC to scan DNA until it finds its consensus sequence, where it cleaves and resolves the cruciform DNA. This is Holliday junction branch migration complex subunit RuvA from Borrelia turicatae (strain 91E135).